The following is a 335-amino-acid chain: CTD kinase subunit beta (335 aa).

2 consecutive Cyclin N-terminal domains span residues 26–151 (ILST…CFDF) and 158–241 (NYMV…LYMH). The interval 269-293 (KNSGRPQKPPQIDPHSSSLADEYRE) is disordered.

Belongs to the cyclin family. CTDK-I consists of three subunits, ctk1/lsk1, ctk2/lsc1 and ctk3 (also called alpha, beta and gamma). Interacts with ctk1/lsk1. This interaction is dependent on ctk1/lsk1 kinase activity.

The protein resides in the cytoplasm. It localises to the nucleus. Cyclin subunit of the CTDK-I complex, which hyperphosphorylates the C-terminal heptapeptide repeat domain (CTD) of the largest RNA polymerase II subunit. As part of the CTDK-I complex, involved in RNA polymerase II transcriptional elongation and pre-mRNA 3'-end processing. Together with ctk3, required for ctk1/lsk1 CTD kinase activation. Together with ctk1/lsk1, required for the regulation of cytokinesis by phosphorylating 'Ser-2' residues found in the heptad repeats of the CTD. In Schizosaccharomyces pombe (strain 972 / ATCC 24843) (Fission yeast), this protein is CTD kinase subunit beta (lsc1).